Reading from the N-terminus, the 121-residue chain is MARIAGVDVPREKRIVISLTYIYGIGKQTASEVLAEAGVSEDTRTRDLTEEELGKIREILDRIKVEGDLRREVNLNIKRLIEIGSYRGMRHRRGLPVRGQNTKNNARTRKGPSKTVAGKKK.

The segment at 91–121 is disordered; sequence HRRGLPVRGQNTKNNARTRKGPSKTVAGKKK. Positions 106–121 are enriched in basic residues; that stretch reads ARTRKGPSKTVAGKKK.

It belongs to the universal ribosomal protein uS13 family. As to quaternary structure, part of the 30S ribosomal subunit. Forms a loose heterodimer with protein S19. Forms two bridges to the 50S subunit in the 70S ribosome.

Its function is as follows. Located at the top of the head of the 30S subunit, it contacts several helices of the 16S rRNA. In the 70S ribosome it contacts the 23S rRNA (bridge B1a) and protein L5 of the 50S subunit (bridge B1b), connecting the 2 subunits; these bridges are implicated in subunit movement. Contacts the tRNAs in the A and P-sites. This Listeria welshimeri serovar 6b (strain ATCC 35897 / DSM 20650 / CCUG 15529 / CIP 8149 / NCTC 11857 / SLCC 5334 / V8) protein is Small ribosomal subunit protein uS13.